The primary structure comprises 888 residues: Alanine--tRNA ligase (888 aa).

The Zn(2+) site is built by His-564, His-568, Cys-676, and His-680.

The protein belongs to the class-II aminoacyl-tRNA synthetase family. It depends on Zn(2+) as a cofactor.

It localises to the cytoplasm. It catalyses the reaction tRNA(Ala) + L-alanine + ATP = L-alanyl-tRNA(Ala) + AMP + diphosphate. Functionally, catalyzes the attachment of alanine to tRNA(Ala) in a two-step reaction: alanine is first activated by ATP to form Ala-AMP and then transferred to the acceptor end of tRNA(Ala). Also edits incorrectly charged Ser-tRNA(Ala) and Gly-tRNA(Ala) via its editing domain. This Bartonella tribocorum (strain CIP 105476 / IBS 506) protein is Alanine--tRNA ligase.